We begin with the raw amino-acid sequence, 303 residues long: Beta-lactamase L2 (303 aa).

The tat-type signal signal peptide spans 1-35 (MLARRRFLQFSGAAVASSLALPLLARAAGKTAASA). S83 functions as the Acyl-ester intermediate in the catalytic mechanism. Substrate is bound at residue 247–249 (KTG).

It belongs to the class-A beta-lactamase family. Post-translationally, predicted to be exported by the Tat system. The position of the signal peptide cleavage has not been experimentally proven.

It catalyses the reaction a beta-lactam + H2O = a substituted beta-amino acid. This chain is Beta-lactamase L2, found in Stenotrophomonas maltophilia (Pseudomonas maltophilia).